A 116-amino-acid polypeptide reads, in one-letter code: NADH-ubiquinone oxidoreductase chain 3 (116 aa).

3 helical membrane-spanning segments follow: residues 4-24, 56-76, and 87-107; these read FMVM…LAFW, FFLV…LLPS, and FTLL…IYEW.

The protein belongs to the complex I subunit 3 family.

Its subcellular location is the mitochondrion membrane. The enzyme catalyses a ubiquinone + NADH + 5 H(+)(in) = a ubiquinol + NAD(+) + 4 H(+)(out). Functionally, core subunit of the mitochondrial membrane respiratory chain NADH dehydrogenase (Complex I) that is believed to belong to the minimal assembly required for catalysis. Complex I functions in the transfer of electrons from NADH to the respiratory chain. The immediate electron acceptor for the enzyme is believed to be ubiquinone. This chain is NADH-ubiquinone oxidoreductase chain 3 (MT-ND3), found in Petromyzon marinus (Sea lamprey).